The sequence spans 468 residues: 6-phospho-beta-galactosidase (468 aa).

Positions 19, 116, 159, 160, and 297 each coordinate D-galactose 6-phosphate. Glu160 acts as the Proton donor in catalysis. The active-site Nucleophile is Glu375. D-galactose 6-phosphate-binding residues include Ser428, Trp429, Lys435, and Tyr437.

This sequence belongs to the glycosyl hydrolase 1 family.

It catalyses the reaction a 6-phospho-beta-D-galactoside + H2O = D-galactose 6-phosphate + an alcohol. The protein operates within carbohydrate metabolism; lactose degradation; D-galactose 6-phosphate and beta-D-glucose from lactose 6-phosphate: step 1/1. This is 6-phospho-beta-galactosidase from Streptococcus pyogenes serotype M5 (strain Manfredo).